Consider the following 870-residue polypeptide: Leucine--tRNA ligase (870 aa).

Residues 42–52 carry the 'HIGH' region motif; it reads PYPSGKLHMGH. The short motif at 629–633 is the 'KMSKS' region element; sequence KMSKS. Position 632 (lysine 632) interacts with ATP.

It belongs to the class-I aminoacyl-tRNA synthetase family.

It localises to the cytoplasm. The enzyme catalyses tRNA(Leu) + L-leucine + ATP = L-leucyl-tRNA(Leu) + AMP + diphosphate. The polypeptide is Leucine--tRNA ligase (Dechloromonas aromatica (strain RCB)).